Reading from the N-terminus, the 366-residue chain is tRNA-specific 2-thiouridylase MnmA (366 aa).

ATP contacts are provided by residues 6–13 and Leu32; that span reads AMSGGVDS. Cys101 acts as the Nucleophile in catalysis. A disulfide bridge links Cys101 with Cys199. An ATP-binding site is contributed by Gly125. Residues 149 to 151 form an interaction with tRNA region; that stretch reads KDQ. Cys199 serves as the catalytic Cysteine persulfide intermediate.

It belongs to the MnmA/TRMU family.

It localises to the cytoplasm. It carries out the reaction S-sulfanyl-L-cysteinyl-[protein] + uridine(34) in tRNA + AH2 + ATP = 2-thiouridine(34) in tRNA + L-cysteinyl-[protein] + A + AMP + diphosphate + H(+). Catalyzes the 2-thiolation of uridine at the wobble position (U34) of tRNA, leading to the formation of s(2)U34. This Corynebacterium diphtheriae (strain ATCC 700971 / NCTC 13129 / Biotype gravis) protein is tRNA-specific 2-thiouridylase MnmA.